We begin with the raw amino-acid sequence, 189 residues long: dTTP/UTP pyrophosphatase (189 aa).

Asp64 serves as the catalytic Proton acceptor.

It belongs to the Maf family. YhdE subfamily. A divalent metal cation is required as a cofactor.

Its subcellular location is the cytoplasm. It catalyses the reaction dTTP + H2O = dTMP + diphosphate + H(+). It carries out the reaction UTP + H2O = UMP + diphosphate + H(+). In terms of biological role, nucleoside triphosphate pyrophosphatase that hydrolyzes dTTP and UTP. May have a dual role in cell division arrest and in preventing the incorporation of modified nucleotides into cellular nucleic acids. In Syntrophomonas wolfei subsp. wolfei (strain DSM 2245B / Goettingen), this protein is dTTP/UTP pyrophosphatase.